The sequence spans 244 residues: Small ribosomal subunit protein eS4 (244 aa).

An S4 RNA-binding domain is found at 37–123 (VPLAILLKYY…AKYKFVRIMN (87 aa)).

The protein belongs to the eukaryotic ribosomal protein eS4 family.

This is Small ribosomal subunit protein eS4 (rps4e) from Sulfolobus acidocaldarius (strain ATCC 33909 / DSM 639 / JCM 8929 / NBRC 15157 / NCIMB 11770).